Reading from the N-terminus, the 129-residue chain is Large ribosomal subunit protein uL22 (129 aa).

The protein belongs to the universal ribosomal protein uL22 family. As to quaternary structure, part of the 50S ribosomal subunit.

Its function is as follows. This protein binds specifically to 23S rRNA; its binding is stimulated by other ribosomal proteins, e.g. L4, L17, and L20. It is important during the early stages of 50S assembly. It makes multiple contacts with different domains of the 23S rRNA in the assembled 50S subunit and ribosome. In terms of biological role, the globular domain of the protein is located near the polypeptide exit tunnel on the outside of the subunit, while an extended beta-hairpin is found that lines the wall of the exit tunnel in the center of the 70S ribosome. The chain is Large ribosomal subunit protein uL22 from Onion yellows phytoplasma (strain OY-M).